A 630-amino-acid polypeptide reads, in one-letter code: MNASSKRKIISQSEISKKIAVMNEEMQGFWANNSWDIRKCPHPSAIELSKNPALRNRWVRFERVKNLWLRTELKYFYFYHLNNGIWNAKTVWIRKGTVINKMLDFLDLKYPSITSITEVPIDKAMTEYRTYLTKQGVRITTTNYKITANQEKTPVKANSYYVTNLKQFIEFIEDFYFDGEEWDKDVWDRRNLPLPDDKVNPTQYEYTINFKGFRNTYFKQLVKRYCKLRLNMDSFSYVSDIAQKLKEFFNFLDIKFKHVQRVHQLTRVEIEAYLSELNMMGIKPSTITGRISILEGLFSTLHRLEWDDVPSKLLIYPEDYPKIPRAKPRFIDEFVLEQLNSHLDKLPEYIATMTMIVQECGMRISELCTLKKGCLLEDKDGYYFLKYYQWKMKKEHIVPISKEVVLLIKVREDKVSEEFPDSEYLFPRKDGSPLKQETFRGELNKLAYEQNIVDKLGEIYRFHAHAFRHSVGTRTINNGVPQHIVQKFLGHESPEMTSRYAHIFDETLKNEFTKFQEKLVTNNGDVLNLDDDSEVDDVELQWFKKNINAQVLPNGYCRLPVIAGGCPHANACLDCTHFCTSKQFLPQHEEQLERTEELLTIAKDKQWQRQIETNSRVKERLEQIIGSLTG.

Positions 216–302 constitute a Core-binding (CB) domain; it reads TYFKQLVKRY…ILEGLFSTLH (87 aa). The Tyr recombinase domain maps to 326-513; the sequence is AKPRFIDEFV…FDETLKNEFT (188 aa). Residues Arg363, Lys391, His465, Arg468, and His491 contribute to the active site. The active-site O-(3'-phospho-DNA)-tyrosine intermediate is Tyr500.

Belongs to the 'phage' integrase family.

The protein is Transposase B from transposon PsiTn554 (tnpB) of Staphylococcus aureus.